A 207-amino-acid polypeptide reads, in one-letter code: Large ribosomal subunit protein uL4 (207 aa).

Residues 48–70 (KAQKTRSEVSGGGAKPWRQKGTG) are disordered.

The protein belongs to the universal ribosomal protein uL4 family. Part of the 50S ribosomal subunit.

In terms of biological role, one of the primary rRNA binding proteins, this protein initially binds near the 5'-end of the 23S rRNA. It is important during the early stages of 50S assembly. It makes multiple contacts with different domains of the 23S rRNA in the assembled 50S subunit and ribosome. Functionally, forms part of the polypeptide exit tunnel. In Francisella tularensis subsp. mediasiatica (strain FSC147), this protein is Large ribosomal subunit protein uL4.